A 546-amino-acid polypeptide reads, in one-letter code: DDB1- and CUL4-associated factor 11 (546 aa).

Residues 1–19 show a composition bias toward low complexity; that stretch reads MGSRNSSSAGSGSGDPSEG. Residues 1 to 40 are disordered; it reads MGSRNSSSAGSGSGDPSEGLPRRGAGLRRSEEEEEEDEDV. A phosphoserine mark is found at Leu-49 and Ser-75. 7 WD repeats span residues 170-210, 216-258, 263-302, 305-345, 353-392, 435-480, and 481-520; these read SYSQ…RKFK, DVGW…TALD, ERRF…RTLQ, SHED…EDDP, GHQD…SREG, GVLH…KKLT, and NHKA…YFQD. A disordered region spans residues 523–546; sequence PESEECASAPAPVPQSSTPFSSPQ. Polar residues predominate over residues 536-546; sequence PQSSTPFSSPQ.

Interacts with DDB1 and CUL4A.

Its pathway is protein modification; protein ubiquitination. Functionally, may function as a substrate receptor for CUL4-DDB1 E3 ubiquitin-protein ligase complex. The chain is DDB1- and CUL4-associated factor 11 (DCAF11) from Homo sapiens (Human).